A 341-amino-acid chain; its full sequence is Phenylalanine--tRNA ligase alpha subunit (341 aa).

E259 contributes to the Mg(2+) binding site.

It belongs to the class-II aminoacyl-tRNA synthetase family. Phe-tRNA synthetase alpha subunit type 1 subfamily. Tetramer of two alpha and two beta subunits. Requires Mg(2+) as cofactor.

The protein localises to the cytoplasm. It carries out the reaction tRNA(Phe) + L-phenylalanine + ATP = L-phenylalanyl-tRNA(Phe) + AMP + diphosphate + H(+). This is Phenylalanine--tRNA ligase alpha subunit from Mycobacterium bovis (strain ATCC BAA-935 / AF2122/97).